A 1243-amino-acid polypeptide reads, in one-letter code: Multifunctional 2-oxoglutarate metabolism enzyme (1243 aa).

A 2-oxoglutarate dehydrogenase E1, N-terminal part region spans residues 1–40 (MNSPSPFGQNEWLVEEMYRKFREDPSSVDPSWHEFLVDYS). Basic and acidic residues predominate over residues 22–36 (REDPSSVDPSWHEFL). The disordered stretch occupies residues 22–118 (REDPSSVDPS…AAPAGVSDDD (97 aa)). Residues 41–103 (PEPTNDAPAG…KKPEEKTSPA (63 aa)) are linker. A compositionally biased stretch (low complexity) spans 47–58 (APAGNGKPAAAP). The span at 59-71 (TAPPEPASAPAPK) shows a compositional bias: pro residues. Residues 91–100 (APEKKPEEKT) are compositionally biased toward basic and acidic residues. A compositionally biased stretch (low complexity) spans 101–112 (SPAPKAKTAAPA). The segment at 104–353 (PKAKTAAPAG…LRTIHTLLLD (250 aa)) is succinyltransferase E2. The Proton acceptor; for succinyltransferase activity role is filled by histidine 332. Residues 354–1243 (DEFYDEIFRE…QQEIIDEAFG (890 aa)) are 2-oxoglutarate dehydrogenase E1, C-terminal part. Arginine 558 lines the thiamine diphosphate pocket. 2-oxoglutarate is bound by residues histidine 597 and serine 622. Residues serine 622, leucine 624, aspartate 661, alanine 662, alanine 663, and asparagine 694 each contribute to the thiamine diphosphate site. Position 661 (aspartate 661) interacts with Mg(2+). Mg(2+)-binding residues include asparagine 694 and isoleucine 696. Positions 799–831 (DISMKEAEDALRDYQGQLERVFNEVRELEKHAI) form a coiled coil. Histidine 1036 serves as a coordination point for 2-oxoglutarate. Acetyl-CoA-binding residues include threonine 1054, arginine 1070, lysine 1105, serine 1108, glutamine 1158, arginine 1165, and arginine 1166.

Belongs to the 2-oxoacid dehydrogenase family. Kgd subfamily. Homodimer. The 2-oxoglutarate dehydrogenase (ODH) complex contains multiple copies of three enzymatic components: 2-oxoglutarate dehydrogenase (E1), dihydrolipoamide succinyltransferase (E2) and lipoamide dehydrogenase (E3). Mg(2+) serves as cofactor. Thiamine diphosphate is required as a cofactor.

The catalysed reaction is glyoxylate + 2-oxoglutarate + H(+) = 2-hydroxy-3-oxoadipate + CO2. It carries out the reaction 2-oxoglutarate + H(+) = succinate semialdehyde + CO2. It catalyses the reaction N(6)-[(R)-lipoyl]-L-lysyl-[protein] + 2-oxoglutarate + H(+) = N(6)-[(R)-S(8)-succinyldihydrolipoyl]-L-lysyl-[protein] + CO2. The enzyme catalyses N(6)-[(R)-dihydrolipoyl]-L-lysyl-[protein] + succinyl-CoA = N(6)-[(R)-S(8)-succinyldihydrolipoyl]-L-lysyl-[protein] + CoA. It participates in carbohydrate metabolism; tricarboxylic acid cycle; succinate from 2-oxoglutarate (transferase route): step 1/2. It functions in the pathway carbohydrate metabolism; tricarboxylic acid cycle; succinyl-CoA from 2-oxoglutarate (dehydrogenase route): step 1/1. With respect to regulation, alpha-ketoglutarate dehydrogenase and decarboxylase activities are inhibited by unphosphorylated GarA, and allosterically activated by acetyl-CoA, the main substrate of the TCA cycle. Functionally, shows three enzymatic activities that share a first common step, the attack of thiamine-PP on 2-oxoglutarate (alpha-ketoglutarate, KG), leading to the formation of an enamine-thiamine-PP intermediate upon decarboxylation. Thus, displays KGD activity, catalyzing the decarboxylation from five-carbon 2-oxoglutarate to four-carbon succinate semialdehyde (SSA). Also catalyzes C-C bond formation between the activated aldehyde formed after decarboxylation of alpha-ketoglutarate and the carbonyl of glyoxylate (GLX), to yield 2-hydroxy-3-oxoadipate (HOA), which spontaneously decarboxylates to form 5-hydroxylevulinate (HLA). And is also a component of the 2-oxoglutarate dehydrogenase (ODH) complex, that catalyzes the overall conversion of 2-oxoglutarate to succinyl-CoA and CO(2). The KG decarboxylase and KG dehydrogenase reactions provide two alternative, tightly regulated, pathways connecting the oxidative and reductive branches of the TCA cycle. The polypeptide is Multifunctional 2-oxoglutarate metabolism enzyme (kgd) (Mycolicibacterium vanbaalenii (strain DSM 7251 / JCM 13017 / BCRC 16820 / KCTC 9966 / NRRL B-24157 / PYR-1) (Mycobacterium vanbaalenii)).